The chain runs to 156 residues: uncharacterized protein (156 aa).

The 146-residue stretch at 11–156 folds into the N-acetyltransferase domain; it reads EEFRSYLTYT…ETDVVMSKKL (146 aa).

It belongs to the acetyltransferase family. Homodimer.

This is an uncharacterized protein from Bacillus subtilis (strain 168).